Here is a 392-residue protein sequence, read N- to C-terminus: Chorismate synthase (392 aa).

NADP(+) contacts are provided by Arg-40 and Arg-46. FMN contacts are provided by residues Arg-135–Ser-137, Gln-256–Ala-257, Gly-300, Lys-315–Ser-319, and Arg-341.

This sequence belongs to the chorismate synthase family. As to quaternary structure, homotetramer. Requires FMNH2 as cofactor.

The enzyme catalyses 5-O-(1-carboxyvinyl)-3-phosphoshikimate = chorismate + phosphate. It participates in metabolic intermediate biosynthesis; chorismate biosynthesis; chorismate from D-erythrose 4-phosphate and phosphoenolpyruvate: step 7/7. Its function is as follows. Catalyzes the anti-1,4-elimination of the C-3 phosphate and the C-6 proR hydrogen from 5-enolpyruvylshikimate-3-phosphate (EPSP) to yield chorismate, which is the branch point compound that serves as the starting substrate for the three terminal pathways of aromatic amino acid biosynthesis. This reaction introduces a second double bond into the aromatic ring system. The polypeptide is Chorismate synthase (Salinispora tropica (strain ATCC BAA-916 / DSM 44818 / JCM 13857 / NBRC 105044 / CNB-440)).